A 647-amino-acid chain; its full sequence is XK-related protein 4 (647 aa).

Residues 1 to 15 show a composition bias toward basic and acidic residues; that stretch reads MAAKSDGRLKMKKSS. The segment at 1–44 is disordered; that stretch reads MAAKSDGRLKMKKSSDVAFTPLQNSDNSGSVQGLAPGLPSGSGA. Over residues 21-31 the composition is skewed to polar residues; sequence PLQNSDNSGSV. A run of 2 helical transmembrane segments spans residues 112 to 132 and 142 to 162; these read WILA…WLAV and WFGL…VFSF. Phosphoserine is present on S197. A disordered region spans residues 197 to 238; that stretch reads SAAGEGEVRPSTPQRQASNASKSNIAATNSGSNSNGATRTSG. Positions 207–236 are enriched in polar residues; the sequence is STPQRQASNASKSNIAATNSGSNSNGATRT. 8 helical membrane passes run 245-265, 303-323, 328-348, 362-382, 393-415, 425-445, 454-474, and 484-504; these read CSFC…GQIW, HLLA…CIIV, LQAL…WALA, KPIS…TIAA, VFQL…WIVH, WEEI…WFNV, LFIY…LWYL, and FAIP…VFML.

It belongs to the XK family. Homodimer; homodimerization takes place upon caspase cleavage. Interacts with the processed C-terminus of XRCC4 (protein XRCC4, C-terminus); interaction promotes the phospholipid scramblase activity. In terms of processing, undergoes proteolytic processing by caspase-3 (CASP3), caspase-6 (CASP6) and caspase-7 (CASP7) to generate the XK-related protein 4, processed form, leading to its activation. As to expression, highly expressed in expressed in the brain; weakly expressed in the spleen, thymus, uterus, blood vessels and fetus.

The protein resides in the cell membrane. It carries out the reaction a 1,2-diacyl-sn-glycero-3-phospho-L-serine(in) = a 1,2-diacyl-sn-glycero-3-phospho-L-serine(out). Phospholipid scramblase activity is activated upon caspase cleavage to generate the XK-related protein 4, processed form. Does not act prior the onset of apoptosis. Its activity is regulated as follows. Homodimerizes upon caspase cleavage. Phospholipid scramblase activity is activated following interaction with the processed C-terminus of XRCC4 (protein XRCC4, C-terminus). Its function is as follows. Phospholipid scramblase that promotes phosphatidylserine exposure on apoptotic cell surface. Phosphatidylserine is a specific marker only present at the surface of apoptotic cells and acts as a specific signal for engulfment. The sequence is that of XK-related protein 4 from Mus musculus (Mouse).